The following is a 557-amino-acid chain: Dihydroxy-acid dehydratase (557 aa).

Asp78 serves as a coordination point for Mg(2+). A [2Fe-2S] cluster-binding site is contributed by Cys119. Mg(2+) is bound by residues Asp120 and Lys121. Lys121 is modified (N6-carboxylysine). Residue Cys192 coordinates [2Fe-2S] cluster. Position 442 (Glu442) interacts with Mg(2+). Ser468 functions as the Proton acceptor in the catalytic mechanism.

It belongs to the IlvD/Edd family. As to quaternary structure, homodimer. Requires [2Fe-2S] cluster as cofactor. Mg(2+) serves as cofactor.

The enzyme catalyses (2R)-2,3-dihydroxy-3-methylbutanoate = 3-methyl-2-oxobutanoate + H2O. It catalyses the reaction (2R,3R)-2,3-dihydroxy-3-methylpentanoate = (S)-3-methyl-2-oxopentanoate + H2O. The protein operates within amino-acid biosynthesis; L-isoleucine biosynthesis; L-isoleucine from 2-oxobutanoate: step 3/4. It participates in amino-acid biosynthesis; L-valine biosynthesis; L-valine from pyruvate: step 3/4. Functionally, functions in the biosynthesis of branched-chain amino acids. Catalyzes the dehydration of (2R,3R)-2,3-dihydroxy-3-methylpentanoate (2,3-dihydroxy-3-methylvalerate) into 2-oxo-3-methylpentanoate (2-oxo-3-methylvalerate) and of (2R)-2,3-dihydroxy-3-methylbutanoate (2,3-dihydroxyisovalerate) into 2-oxo-3-methylbutanoate (2-oxoisovalerate), the penultimate precursor to L-isoleucine and L-valine, respectively. In Bacillus cereus (strain ATCC 10987 / NRS 248), this protein is Dihydroxy-acid dehydratase.